The sequence spans 340 residues: Coproporphyrin III ferrochelatase (340 aa).

Fe-coproporphyrin III is bound by residues serine 52 and tyrosine 116. Fe(2+) is bound by residues histidine 172 and glutamate 255.

It belongs to the ferrochelatase family.

The protein resides in the cytoplasm. The enzyme catalyses Fe-coproporphyrin III + 2 H(+) = coproporphyrin III + Fe(2+). It functions in the pathway porphyrin-containing compound metabolism; protoheme biosynthesis. Functionally, involved in coproporphyrin-dependent heme b biosynthesis. Catalyzes the insertion of ferrous iron into coproporphyrin III to form Fe-coproporphyrin III. The sequence is that of Coproporphyrin III ferrochelatase from Mycobacterium ulcerans (strain Agy99).